Consider the following 80-residue polypeptide: UPF0291 protein EF_1580 (80 aa).

A disordered region spans residues 60-80 (TDVTPEKLKKIQREKGLHNRK). A compositionally biased stretch (basic and acidic residues) spans 63–80 (TPEKLKKIQREKGLHNRK).

This sequence belongs to the UPF0291 family.

The protein resides in the cytoplasm. The sequence is that of UPF0291 protein EF_1580 from Enterococcus faecalis (strain ATCC 700802 / V583).